The following is a 607-amino-acid chain: Tyrosine-protein kinase RYK (607 aa).

The disordered stretch occupies residues 1-20 (MRGAARLGRPGRSCLPGARG). The first 25 residues, 1-25 (MRGAARLGRPGRSCLPGARGLRAPP), serve as a signal peptide directing secretion. The Extracellular segment spans residues 26 to 227 (PPPLLLLLAL…VHAAPTTSTR (202 aa)). The WIF domain maps to 66-194 (LYLSEDEVRR…VLNFKRRKMC (129 aa)). 5 N-linked (GlcNAc...) asparagine glycosylation sites follow: Asn139, Asn174, Asn178, Asn182, and Asn209. Cys159 and Cys194 form a disulfide bridge. A helical membrane pass occupies residues 228 to 248 (VFYISVGVCCAVIFLVAIILA). At 249 to 607 (VLHLHSMKRI…EFHAALGAYV (359 aa)) the chain is on the cytoplasmic side. Residues 266 to 282 (ASSSSQGLSQPSTQTTQ) are compositionally biased toward low complexity. Positions 266 to 290 (ASSSSQGLSQPSTQTTQYLRADTPN) are disordered. One can recognise a Protein kinase domain in the interval 330-603 (ITLKDVLQEG…QCLTEFHAAL (274 aa)). ATP-binding positions include 336-344 (LQEGTFGRI) and Lys364. The Proton acceptor role is filled by Asp465. Residue Tyr495 is modified to Phosphotyrosine; by autocatalysis.

It belongs to the protein kinase superfamily. Tyr protein kinase family. Interacts with DVL1 (via PDZ domain). Post-translationally, proteolytically cleaved, in part by presenilin, in response to WNT3 stimulation. Cleavage occurs during neuronal differentiation. Observed in all the tissues examined.

The protein resides in the membrane. It is found in the nucleus. The protein localises to the cytoplasm. It carries out the reaction L-tyrosyl-[protein] + ATP = O-phospho-L-tyrosyl-[protein] + ADP + H(+). Its function is as follows. May be a coreceptor along with FZD8 of Wnt proteins, such as WNT1, WNT3, WNT3A and WNT5A. Involved in neuron differentiation, axon guidance, corpus callosum establishment and neurite outgrowth. In response to WNT3 stimulation, receptor C-terminal cleavage occurs in its transmembrane region and allows the C-terminal intracellular product to translocate from the cytoplasm to the nucleus where it plays a crucial role in neuronal development. The polypeptide is Tyrosine-protein kinase RYK (Homo sapiens (Human)).